A 505-amino-acid chain; its full sequence is MAIQAEEISALIKQQLEKFDTTLTVEEVGTVTYVGDGVARATGLANALAGELVEFANGTYGMAQNLESSEVGIIILGGFDDIREGDTVKRTGRIMEVPVGEQLIGRVVNALGQPIDGLGEIKTDKTRPVEVKAPGVMERKSVSEPLQTGIKAIDALVPIGRGQRELIIGDRKTGKTSLAIDTILNQKDQNMIVIYVAIGQKNSTVRAQVETLRQMGAMDYTIVVNAGPSEPAPMLYLAPYVGAAMGEEFMYNGKHVLIVYDDLSKQATAYRELSLILRRPPGREAYPGDVFYLHSRLLERAAKLSDELGGGSMTALPFIETQAGDVSAYIPTNVISITDGQVFLDADQFYAGVRPAIDAGTSVSRVGGDAQIKAMKKVAGTLRLDLASFRELESFAQFGSDLDSATQAKLARGRRTVEILKQPLNKPMPVQHQVVVLYALTHGYLDDVEVADIQRFQDELIAYVDANASELFKAIVETKNLPEEADLNAAIEAFKAGFAGSESAE.

169–176 (GDRKTGKT) serves as a coordination point for ATP.

Belongs to the ATPase alpha/beta chains family. In terms of assembly, F-type ATPases have 2 components, CF(1) - the catalytic core - and CF(0) - the membrane proton channel. CF(1) has five subunits: alpha(3), beta(3), gamma(1), delta(1), epsilon(1). CF(0) has three main subunits: a(1), b(2) and c(9-12). The alpha and beta chains form an alternating ring which encloses part of the gamma chain. CF(1) is attached to CF(0) by a central stalk formed by the gamma and epsilon chains, while a peripheral stalk is formed by the delta and b chains.

The protein resides in the cell membrane. The catalysed reaction is ATP + H2O + 4 H(+)(in) = ADP + phosphate + 5 H(+)(out). Produces ATP from ADP in the presence of a proton gradient across the membrane. The alpha chain is a regulatory subunit. The polypeptide is ATP synthase subunit alpha (Leuconostoc mesenteroides subsp. mesenteroides (strain ATCC 8293 / DSM 20343 / BCRC 11652 / CCM 1803 / JCM 6124 / NCDO 523 / NBRC 100496 / NCIMB 8023 / NCTC 12954 / NRRL B-1118 / 37Y)).